A 190-amino-acid polypeptide reads, in one-letter code: B3 domain-containing protein At1g49475 (190 aa).

Positions 1 to 27 (MRNMHTNRRSPGPITSAATQRRLKPEP) are disordered. Positions 33 to 125 (KFIKIILLSR…CFRVVIFDVS (93 aa)) form a DNA-binding region, TF-B3.

The protein localises to the nucleus. In Arabidopsis thaliana (Mouse-ear cress), this protein is B3 domain-containing protein At1g49475.